Consider the following 300-residue polypeptide: Ribonuclease Z (300 aa).

Zn(2+) is bound by residues histidine 63, histidine 65, aspartate 67, histidine 68, histidine 140, aspartate 207, and histidine 265. Aspartate 67 serves as the catalytic Proton acceptor.

The protein belongs to the RNase Z family. As to quaternary structure, homodimer. Zn(2+) is required as a cofactor.

The catalysed reaction is Endonucleolytic cleavage of RNA, removing extra 3' nucleotides from tRNA precursor, generating 3' termini of tRNAs. A 3'-hydroxy group is left at the tRNA terminus and a 5'-phosphoryl group is left at the trailer molecule.. Functionally, zinc phosphodiesterase, which displays some tRNA 3'-processing endonuclease activity. Probably involved in tRNA maturation, by removing a 3'-trailer from precursor tRNA. The chain is Ribonuclease Z from Ignicoccus hospitalis (strain KIN4/I / DSM 18386 / JCM 14125).